A 244-amino-acid polypeptide reads, in one-letter code: MSKLDLNALNELPKVDRILALAETNAQLEKLDAEGRVAWALDNLPGEYVLSSSFGIQAAVSLHLVNQIRPDIPVILTDTGYLFPETYRFIDELTDKLKLNLKVYRATESAAWQEARYGKLWEQGVEGIEKYNDINKVEPMNRALKELNAQTWFAGLRREQSGSRANLPVLAIQRGVFKVLPIIDWDNRTIYQYLQKNGLKYHPLWDEGYLSVGDTHTTRKWEPGMAEEETRFFGLKRECGLHEG.

The Nucleophile; cysteine thiosulfonate intermediate role is filled by Cys239.

Belongs to the PAPS reductase family. CysH subfamily.

The protein localises to the cytoplasm. It carries out the reaction [thioredoxin]-disulfide + sulfite + adenosine 3',5'-bisphosphate + 2 H(+) = [thioredoxin]-dithiol + 3'-phosphoadenylyl sulfate. Its pathway is sulfur metabolism; hydrogen sulfide biosynthesis; sulfite from sulfate: step 3/3. In terms of biological role, catalyzes the formation of sulfite from phosphoadenosine 5'-phosphosulfate (PAPS) using thioredoxin as an electron donor. The chain is Phosphoadenosine 5'-phosphosulfate reductase from Escherichia coli O157:H7.